Here is a 165-residue protein sequence, read N- to C-terminus: Protein SprT (165 aa).

The SprT-like domain occupies 20–163; that stretch reads EKLAQANLKL…RCVHCGEQLV (144 aa). His78 contacts Zn(2+). Glu79 is a catalytic residue. Residue His82 participates in Zn(2+) binding.

Belongs to the SprT family. Zn(2+) is required as a cofactor.

The protein localises to the cytoplasm. The sequence is that of Protein SprT from Shigella flexneri serotype 5b (strain 8401).